The sequence spans 117 residues: Ribonuclease P protein component (117 aa).

This sequence belongs to the RnpA family. Consists of a catalytic RNA component (M1 or rnpB) and a protein subunit.

The catalysed reaction is Endonucleolytic cleavage of RNA, removing 5'-extranucleotides from tRNA precursor.. Functionally, RNaseP catalyzes the removal of the 5'-leader sequence from pre-tRNA to produce the mature 5'-terminus. It can also cleave other RNA substrates such as 4.5S RNA. The protein component plays an auxiliary but essential role in vivo by binding to the 5'-leader sequence and broadening the substrate specificity of the ribozyme. This chain is Ribonuclease P protein component, found in Thermotoga sp. (strain RQ2).